Here is a 412-residue protein sequence, read N- to C-terminus: CCA-adding enzyme (412 aa).

2 residues coordinate ATP: serine 41 and lysine 44. CTP-binding residues include serine 41 and lysine 44. Mg(2+) contacts are provided by aspartate 53, aspartate 55, and aspartate 106. ATP-binding residues include histidine 129, lysine 149, and tyrosine 158. CTP is bound by residues histidine 129, lysine 149, and tyrosine 158.

The protein belongs to the tRNA nucleotidyltransferase/poly(A) polymerase family. Archaeal CCA-adding enzyme subfamily. As to quaternary structure, homodimer. Mg(2+) serves as cofactor.

It carries out the reaction a tRNA precursor + 2 CTP + ATP = a tRNA with a 3' CCA end + 3 diphosphate. It catalyses the reaction a tRNA with a 3' CCA end + 2 CTP + ATP = a tRNA with a 3' CCACCA end + 3 diphosphate. Its function is as follows. Catalyzes the addition and repair of the essential 3'-terminal CCA sequence in tRNAs without using a nucleic acid template. Adds these three nucleotides in the order of C, C, and A to the tRNA nucleotide-73, using CTP and ATP as substrates and producing inorganic pyrophosphate. tRNA 3'-terminal CCA addition is required both for tRNA processing and repair. Also involved in tRNA surveillance by mediating tandem CCA addition to generate a CCACCA at the 3' terminus of unstable tRNAs. While stable tRNAs receive only 3'-terminal CCA, unstable tRNAs are marked with CCACCA and rapidly degraded. The chain is CCA-adding enzyme from Saccharolobus islandicus (strain Y.G.57.14 / Yellowstone #1) (Sulfolobus islandicus).